Here is a 207-residue protein sequence, read N- to C-terminus: Myosin light chain 6B (207 aa).

Residues Met1–Pro50 are disordered. The segment covering Glu36–Pro50 has biased composition (low complexity). 3 EF-hand domains span residues Asp63 to Asn98, Gly140 to Lys175, and Lys175 to Leu207.

In terms of assembly, myosin is a hexamer of 2 heavy chains and 4 light chains.

Its function is as follows. Regulatory light chain of myosin. Does not bind calcium. The protein is Myosin light chain 6B of Mus musculus (Mouse).